The primary structure comprises 409 residues: 2,3-bisphosphoglycerate-independent phosphoglycerate mutase 1 (409 aa).

A compositionally biased stretch (basic and acidic residues) spans 163–173; that stretch reads SDADPKVEGKP. Positions 163 to 184 are disordered; sequence SDADPKVEGKPPKKIKALDGSP.

The protein belongs to the BPG-independent phosphoglycerate mutase family. A-PGAM subfamily.

It catalyses the reaction (2R)-2-phosphoglycerate = (2R)-3-phosphoglycerate. It functions in the pathway carbohydrate degradation; glycolysis; pyruvate from D-glyceraldehyde 3-phosphate: step 3/5. Its function is as follows. Catalyzes the interconversion of 2-phosphoglycerate and 3-phosphoglycerate. The protein is 2,3-bisphosphoglycerate-independent phosphoglycerate mutase 1 (apgM1) of Methanothermobacter thermautotrophicus (strain ATCC 29096 / DSM 1053 / JCM 10044 / NBRC 100330 / Delta H) (Methanobacterium thermoautotrophicum).